Here is a 221-residue protein sequence, read N- to C-terminus: Endonuclease V (221 aa).

Residues D38 and D104 each contribute to the Mg(2+) site.

This sequence belongs to the endonuclease V family. Requires Mg(2+) as cofactor.

The protein resides in the cytoplasm. It carries out the reaction Endonucleolytic cleavage at apurinic or apyrimidinic sites to products with a 5'-phosphate.. In terms of biological role, DNA repair enzyme involved in the repair of deaminated bases. Selectively cleaves double-stranded DNA at the second phosphodiester bond 3' to a deoxyinosine leaving behind the intact lesion on the nicked DNA. Recognizes only deoxyinosine. The protein is Endonuclease V of Archaeoglobus fulgidus (strain ATCC 49558 / DSM 4304 / JCM 9628 / NBRC 100126 / VC-16).